The following is a 119-amino-acid chain: Fluoride-specific ion channel FluC (119 aa).

A run of 4 helical transmembrane segments spans residues 5-25 (ILPL…LNLA), 30-50 (LSPA…IGIF), 59-79 (WKLL…GFSL), and 92-112 (SALA…WLGL). Na(+)-binding residues include Gly-69 and Thr-72.

This sequence belongs to the fluoride channel Fluc/FEX (TC 1.A.43) family.

The protein localises to the cell inner membrane. It catalyses the reaction fluoride(in) = fluoride(out). Na(+) is not transported, but it plays an essential structural role and its presence is essential for fluoride channel function. Its function is as follows. Fluoride-specific ion channel. Important for reducing fluoride concentration in the cell, thus reducing its toxicity. This chain is Fluoride-specific ion channel FluC, found in Neisseria gonorrhoeae (strain NCCP11945).